Reading from the N-terminus, the 710-residue chain is DNA-directed RNA polymerase III subunit RPC5 (710 aa).

Basic and acidic residues predominate over residues Asp146–Ala155. The disordered stretch occupies residues Asp146–Asp169. Phosphoserine occurs at positions 161 and 162. Residue Lys171 forms a Glycyl lysine isopeptide (Lys-Gly) (interchain with G-Cter in SUMO2) linkage. Ser192 bears the Phosphoserine mark. A Phosphotyrosine modification is found at Tyr224. Lys432 participates in a covalent cross-link: Glycyl lysine isopeptide (Lys-Gly) (interchain with G-Cter in SUMO2). Lys498 is covalently cross-linked (Glycyl lysine isopeptide (Lys-Gly) (interchain with G-Cter in SUMO1); alternate). Lys498 participates in a covalent cross-link: Glycyl lysine isopeptide (Lys-Gly) (interchain with G-Cter in SUMO2); alternate. The interval Lys498–Thr526 is disordered. Acidic residues predominate over residues Leu502–Met520. The residue at position 503 (Ser503) is a Phosphoserine. The required for Pol III complex stability stretch occupies residues Asn558–Ser710. Lys661 participates in a covalent cross-link: Glycyl lysine isopeptide (Lys-Gly) (interchain with G-Cter in SUMO2).

As to quaternary structure, component of the RNA polymerase III complex consisting of at least 17 subunits: a ten-subunit horseshoe-shaped catalytic core composed of POLR3A/RPC1, POLR3B/RPC2, POLR1C/RPAC1, POLR1D/RPAC2, POLR3K/RPC10, POLR2E/RPABC1, POLR2F/RPABC2, POLR2H/RPABC3, POLR2K/RPABC4 and POLR2L/RPABC5; the stalk composed of two subunits POLR3H/RPC8 and CRCP/RPC9, forming a structural mobile part that protrudes out of the core and functions primarily in transcription initiation; and additional subunits homologous to general transcription factors of the RNA polymerase II machinery, POLR3D/RPC4-POLR3E/RPC5 heterodimer and POLR3/CRPC3-POLR3F/RPC6-POLR3G/RPC7 heterotrimer.

The protein resides in the nucleus. DNA-dependent RNA polymerase catalyzes the transcription of DNA into RNA using the four ribonucleoside triphosphates as substrates. Specific peripheric component of RNA polymerase III (Pol III) which synthesizes small non-coding RNAs including 5S rRNA, snRNAs, tRNAs and miRNAs from at least 500 distinct genomic loci. Assembles with POLR3D/RPC4 forming a subcomplex that binds the Pol III core. Enables recruitment of Pol III at transcription initiation site and drives transcription initiation from both type 2 and type 3 DNA promoters. Required for efficient transcription termination and reinitiation. Plays a key role in sensing and limiting infection by intracellular bacteria and DNA viruses. Acts as a nuclear and cytosolic DNA sensor involved in innate immune response. Can sense non-self dsDNA that serves as template for transcription into dsRNA. The non-self RNA polymerase III transcripts, such as Epstein-Barr virus-encoded RNAs (EBERs) induce type I interferon and NF-kappa-B through the RIG-I pathway. In Mus musculus (Mouse), this protein is DNA-directed RNA polymerase III subunit RPC5.